The primary structure comprises 514 residues: MAVWHSANGKVYLPPSTPVARVQSTDEYIQRTNIYYHANTDRLLTVGHPYFNVYNNNGTTLEVPKVSGNQHRVFRLKLPDPNRFALADMSVYNPDKERLVWACRGLEIGRGQPLGVGSTGHPYFNKVKDTENSNSYITNSKDDRQDTSFDPKQIQMFIVGCTPCIGEHWDKAEPCGEQQTGLCPPIELKNTYIQDGDMADIGFGNINFKALQHSRSDVSLDIVNETCKYPDFLKMQNDVYGDACFFYARREQCYARHFFVRGGKTGDDIPGAQVGNGNMKNQFYIPGATGQAQSTIGNAMYFPTVSGSLVSSDAQLFNRPFWLQRAQGHNNGILWANQMFVTVVDNTRNTNFSISVYSQAGDIKDIQDYNADNFREYQRHVEEYEISVILQLCKVPLKAEVLAQINAMNSSLLEEWQLGFVPTPDNPIQDTYRYLESLATRCPEKSPPKEKVDPYKGLNFWDVDMTERLSLDLDQYSLGRKFLFQAGLQQTTVNGTKTTPYRGSIRGTKRKRKN.

Residues 495-514 (GTKTTPYRGSIRGTKRKRKN) form a disordered region.

The protein belongs to the papillomaviridae L1 protein family. In terms of assembly, self-assembles into homopentamers. The capsid has an icosahedral symmetry and consists of 72 capsomers, with each capsomer being a pentamer of L1. Interacts with the minor capsid protein L2; this interaction is necessary for viral genome encapsidation. Interacts with protein E2; this interaction enhances E2-dependent replication and transcription activation.

Its subcellular location is the virion. It localises to the host nucleus. Its function is as follows. Forms an icosahedral capsid with a T=7 symmetry and a 50 nm diameter. The capsid is composed of 72 pentamers linked to each other by disulfide bonds and associated with L2 proteins. Binds to heparan sulfate proteoglycans on cell surface of basal layer keratinocytes to provide initial virion attachment. This binding mediates a conformational change in the virus capsid that facilitates efficient infection. The virion enters the host cell via endocytosis. During virus trafficking, L1 protein dissociates from the viral DNA and the genomic DNA is released to the host nucleus. The virion assembly takes place within the cell nucleus. Encapsulates the genomic DNA together with protein L2. The chain is Major capsid protein L1 from Human papillomavirus 47.